The primary structure comprises 175 residues: Austinoid biosynthesis cluster protein F (175 aa).

The protein belongs to the trt14 isomerase family. Homodimer.

Its pathway is secondary metabolite biosynthesis; terpenoid biosynthesis. Its function is as follows. Part of the gene cluster that mediates the biosynthesis of calidodehydroaustin, a fungal meroterpenoid. The first step of the pathway is the synthesis of 3,5-dimethylorsellinic acid by the polyketide synthase ausA. 3,5-dimethylorsellinic acid is then prenylated by the polyprenyl transferase ausN. Further epoxidation by the FAD-dependent monooxygenase ausM and cyclization by the probable terpene cyclase ausL lead to the formation of protoaustinoid A. Protoaustinoid A is then oxidized to spiro-lactone preaustinoid A3 by the combined action of the FAD-binding monooxygenases ausB and ausC, and the dioxygenase ausE. Acid-catalyzed keto-rearrangement and ring contraction of the tetraketide portion of preaustinoid A3 by ausJ lead to the formation of preaustinoid A4. The aldo-keto reductase ausK, with the help of ausH, is involved in the next step by transforming preaustinoid A4 into isoaustinone which is in turn hydroxylated by the P450 monooxygenase ausI to form austinolide. The cytochrome P450 monooxygenase ausG modifies austinolide to austinol. Austinol is further acetylated to austin by the O-acetyltransferase ausP, which spontaneously changes to dehydroaustin. The cytochrome P450 monooxygenase ausR then converts dehydroaustin is into 7-dehydrodehydroaustin. The hydroxylation catalyzed by ausR permits the O-acetyltransferase ausQ to add an additional acetyl group to the molecule, leading to the formation of acetoxydehydroaustin. The short chain dehydrogenase ausT catalyzes the reduction of the double bond present between carbon atoms 1 and 2 to convert 7-dehydrodehydroaustin into 1,2-dihydro-7-hydroxydehydroaustin. AusQ catalyzes not only an acetylation reaction but also the addition of the PKS ausV diketide product to 1,2-dihydro-7-hydroxydehydroaustin, forming precalidodehydroaustin. Finally, the iron/alpha-ketoglutarate-dependent dioxygenase converts precalidodehydroaustin into calidodehydroaustin. This Aspergillus calidoustus protein is Austinoid biosynthesis cluster protein F.